The following is a 213-amino-acid chain: ATP-dependent Clp protease proteolytic subunit 1 (213 aa).

Serine 108 acts as the Nucleophile in catalysis. Histidine 133 is a catalytic residue.

The protein belongs to the peptidase S14 family. In terms of assembly, fourteen ClpP subunits assemble into 2 heptameric rings which stack back to back to give a disk-like structure with a central cavity, resembling the structure of eukaryotic proteasomes.

The protein localises to the cytoplasm. The enzyme catalyses Hydrolysis of proteins to small peptides in the presence of ATP and magnesium. alpha-casein is the usual test substrate. In the absence of ATP, only oligopeptides shorter than five residues are hydrolyzed (such as succinyl-Leu-Tyr-|-NHMec, and Leu-Tyr-Leu-|-Tyr-Trp, in which cleavage of the -Tyr-|-Leu- and -Tyr-|-Trp bonds also occurs).. Functionally, cleaves peptides in various proteins in a process that requires ATP hydrolysis. Has a chymotrypsin-like activity. Plays a major role in the degradation of misfolded proteins. This chain is ATP-dependent Clp protease proteolytic subunit 1, found in Frankia casuarinae (strain DSM 45818 / CECT 9043 / HFP020203 / CcI3).